The following is a 1233-amino-acid chain: Integrator complex subunit 4 homolog (1233 aa).

2 HEAT repeats span residues 236 to 273 (SLINQIIEYIEPLLHSTSPLVRRETIVLLGSIVKNLDK) and 275 to 310 (SEEIQILLLNYLKDTDFRVREASLKSLSVIFQRGAS). A disordered region spans residues 426 to 473 (RLQQKQQQQQQQQQQQQQQPPQQQPSQQPNQQPNQQQTNVSGTHIATP). Low complexity predominate over residues 428–462 (QQKQQQQQQQQQQQQQQPPQQQPSQQPNQQPNQQQ). 3 HEAT repeats span residues 487-524 (ILESGVIGAFIQGLEDEFYEVRSSAIDSMCELSVRNDE), 525-561 (FAQKNIDFLVDIFNDEIESVRINSINSLRKIGNNVVI), and 563-597 (EEQLHIILANLESSSKEERQSLHRLLTSIHLSNYS). A compositionally biased stretch (low complexity) spans 767–792 (NNNTNNNNNNNNNNNNNNNNNNNNNN). Disordered stretches follow at residues 767 to 796 (NNNTNNNNNNNNNNNNNNNNNNNNNNDEND) and 993 to 1057 (DKKL…TTTT). Over residues 1000–1013 (EENEENEENENNEN) the composition is skewed to acidic residues. Over residues 1014–1030 (ENEKENGKNKEKEKNEN) the composition is skewed to basic and acidic residues. Low complexity predominate over residues 1046–1057 (KTTSELIKTTTT).

It belongs to the Integrator subunit 4 family. In terms of assembly, component of the Integrator complex. The core complex associates with protein phosphatase 2A subunits, to form the Integrator-PP2A (INTAC) complex.

It localises to the nucleus. The protein localises to the cytoplasm. In terms of biological role, component of the integrator complex, a multiprotein complex that terminates RNA polymerase II (Pol II) transcription in the promoter-proximal region of genes. The integrator complex provides a quality checkpoint during transcription elongation by driving premature transcription termination of transcripts that are unfavorably configured for transcriptional elongation: the complex terminates transcription by (1) catalyzing dephosphorylation of the C-terminal domain (CTD) of Pol II subunit polr2a, (2) degrading the exiting nascent RNA transcript via endonuclease activity and (3) promoting the release of Pol II from bound DNA. The integrator complex is also involved in terminating the synthesis of non-coding Pol II transcripts, such as enhancer RNAs (eRNAs), small nuclear RNAs (snRNAs), telomerase RNAs and long non-coding RNAs (lncRNAs). In Dictyostelium discoideum (Social amoeba), this protein is Integrator complex subunit 4 homolog (ints4).